A 136-amino-acid chain; its full sequence is Large ribosomal subunit protein eL27 (136 aa).

Belongs to the eukaryotic ribosomal protein eL27 family.

The protein is Large ribosomal subunit protein eL27 (RPL27) of Candida albicans (Yeast).